The following is a 354-amino-acid chain: DNA polymerase IV (354 aa).

Residues 6–187 (IIHVDCDCFY…LPVARLHGVG (182 aa)) enclose the UmuC domain. The Mg(2+) site is built by aspartate 10 and aspartate 105. Glutamate 106 is an active-site residue.

It belongs to the DNA polymerase type-Y family. As to quaternary structure, monomer. Requires Mg(2+) as cofactor.

The protein resides in the cytoplasm. The catalysed reaction is DNA(n) + a 2'-deoxyribonucleoside 5'-triphosphate = DNA(n+1) + diphosphate. Its function is as follows. Poorly processive, error-prone DNA polymerase involved in untargeted mutagenesis. Copies undamaged DNA at stalled replication forks, which arise in vivo from mismatched or misaligned primer ends. These misaligned primers can be extended by PolIV. Exhibits no 3'-5' exonuclease (proofreading) activity. May be involved in translesional synthesis, in conjunction with the beta clamp from PolIII. In Pseudomonas putida (strain ATCC 700007 / DSM 6899 / JCM 31910 / BCRC 17059 / LMG 24140 / F1), this protein is DNA polymerase IV.